The primary structure comprises 232 residues: Probable transcriptional regulatory protein Bd1964 (232 aa).

The protein belongs to the TACO1 family.

The protein localises to the cytoplasm. The sequence is that of Probable transcriptional regulatory protein Bd1964 from Bdellovibrio bacteriovorus (strain ATCC 15356 / DSM 50701 / NCIMB 9529 / HD100).